The chain runs to 410 residues: NADH-quinone oxidoreductase subunit H (410 aa).

Transmembrane regions (helical) follow at residues 16–36 (LILA…LAAI), 84–104 (WIYL…FAVI), 124–144 (LPVA…GIVL), 165–185 (VISY…YAGT), 198–218 (VWFI…MVGE), 260–280 (VSAL…PISI), 288–308 (WWPL…FMWL), 320–340 (FMRL…AIVA), and 353–373 (WVTA…LLAW). Residues 384 to 410 (SHSPPAQSSDHGAFPVPPLPVKEPADA) form a disordered region.

The protein belongs to the complex I subunit 1 family. As to quaternary structure, NDH-1 is composed of 14 different subunits. Subunits NuoA, H, J, K, L, M, N constitute the membrane sector of the complex.

It is found in the cell membrane. The enzyme catalyses a quinone + NADH + 5 H(+)(in) = a quinol + NAD(+) + 4 H(+)(out). In terms of biological role, NDH-1 shuttles electrons from NADH, via FMN and iron-sulfur (Fe-S) centers, to quinones in the respiratory chain. The immediate electron acceptor for the enzyme in this species is believed to be menaquinone. Couples the redox reaction to proton translocation (for every two electrons transferred, four hydrogen ions are translocated across the cytoplasmic membrane), and thus conserves the redox energy in a proton gradient. In Mycolicibacterium gilvum (strain PYR-GCK) (Mycobacterium gilvum (strain PYR-GCK)), this protein is NADH-quinone oxidoreductase subunit H.